The primary structure comprises 235 residues: Carboxymethylenebutenolidase 2 (235 aa).

Catalysis depends on residues C117, D173, and H204.

The protein belongs to the dienelactone hydrolase family. As to quaternary structure, monomer.

The catalysed reaction is 2-(5-oxo-2,5-dihydrofuran-2-ylidene)acetate + H2O = 4-oxohex-2-enedioate + H(+). Its pathway is aromatic compound metabolism; 3-chlorocatechol degradation. In terms of biological role, ring cleavage of cyclic ester dienelactone to produce maleylacetate. This Cupriavidus pinatubonensis (strain JMP 134 / LMG 1197) (Cupriavidus necator (strain JMP 134)) protein is Carboxymethylenebutenolidase 2 (tfdEII).